The following is a 644-amino-acid chain: Macrolide export ATP-binding/permease protein MacB (644 aa).

The ABC transporter domain maps to isoleucine 4–alanine 242. Glycine 40–serine 47 provides a ligand contact to ATP. 4 helical membrane passes run leucine 270–glycine 290, isoleucine 524–valine 544, leucine 574–phenylalanine 594, and alanine 607–methionine 627.

The protein belongs to the ABC transporter superfamily. Macrolide exporter (TC 3.A.1.122) family. In terms of assembly, homodimer.

It is found in the cell inner membrane. In terms of biological role, non-canonical ABC transporter that contains transmembrane domains (TMD), which form a pore in the inner membrane, and an ATP-binding domain (NBD), which is responsible for energy generation. Confers resistance against macrolides. In Neisseria gonorrhoeae (strain ATCC 700825 / FA 1090), this protein is Macrolide export ATP-binding/permease protein MacB.